A 499-amino-acid polypeptide reads, in one-letter code: Dual specificity protein kinase CLK2 (499 aa).

The disordered stretch occupies residues 1–65 (MPHPRRYHSS…RSSYDDHSSD (65 aa)). The span at 8 to 23 (HSSERGSRGSYHEHYQ) shows a compositional bias: basic and acidic residues. Residues 24-33 (SRKHKRRRSR) are compositionally biased toward basic residues. Position 34 is a phosphoserine; by PKB/AKT1 (S34). Basic and acidic residues predominate over residues 47–65 (REDSYHVRSRSSYDDHSSD). Position 98 is a phosphoserine; by autocatalysis (S98). The residue at position 99 (Y99) is a Phosphotyrosine; by autocatalysis. Residues 102 to 142 (HRENSSYRSQRSSRRKHRRRRRRSRTFSRSSSHSSRRAKSV) are disordered. Over residues 112–127 (RSSRRKHRRRRRRSRT) the composition is skewed to basic residues. T127 bears the Phosphothreonine; by PKB/AKT1 mark. Position 141 is a phosphoserine; by autocatalysis (S141). Y152 carries the post-translational modification Phosphotyrosine. The Protein kinase domain maps to 163–479 (EIVSTLGEGT…GEALQHPFFA (317 aa)). ATP contacts are provided by residues 168–176 (LGEGTFGRV) and K192. D289 serves as the catalytic Proton acceptor. At T343 the chain carries Phosphothreonine; by PKB/AKT2.

This sequence belongs to the protein kinase superfamily. CMGC Ser/Thr protein kinase family. Lammer subfamily. As to quaternary structure, interacts with RBMX and UBL5. Interacts with AKT1. Autophosphorylates on all three types of residues. Phosphorylation on Ser-34 and Thr-127 by AKT1 is induced by ionizing radiation or insulin. Phosphorylation plays a critical role in cell proliferation following low dose radiation and prevents cell death following high dose radiation. Phosphorylation at Thr-343 by PKB/AKT2 induces its kinase activity which is required for its stability. The phosphorylation status at Ser-141 influences its subnuclear localization; inhibition of phosphorylation at Ser-141 results in accumulation in the nuclear speckle.

It localises to the nucleus. The protein localises to the nucleus speckle. It carries out the reaction L-seryl-[protein] + ATP = O-phospho-L-seryl-[protein] + ADP + H(+). The catalysed reaction is L-threonyl-[protein] + ATP = O-phospho-L-threonyl-[protein] + ADP + H(+). It catalyses the reaction L-tyrosyl-[protein] + ATP = O-phospho-L-tyrosyl-[protein] + ADP + H(+). 5,6-dichloro-1-b-D-ribofuranosylbenzimidazole (DRB) inhibits autophosphorylation. TG003 inhibits its kinase activity and affects the regulation of alternative splicing mediated by phosphorylation of SR proteins. Functionally, dual specificity kinase acting on both serine/threonine and tyrosine-containing substrates. Phosphorylates serine- and arginine-rich (SR) proteins of the spliceosomal complex. May be a constituent of a network of regulatory mechanisms that enable SR proteins to control RNA splicing and can cause redistribution of SR proteins from speckles to a diffuse nucleoplasmic distribution. Acts as a suppressor of hepatic gluconeogenesis and glucose output by repressing PPARGC1A transcriptional activity on gluconeogenic genes via its phosphorylation. Phosphorylates PPP2R5B thereby stimulating the assembly of PP2A phosphatase with the PPP2R5B-AKT1 complex leading to dephosphorylation of AKT1. Phosphorylates: PTPN1, SRSF1 and SRSF3. Regulates the alternative splicing of tissue factor (F3) pre-mRNA in endothelial cells. Phosphorylates PAGE4 at several serine and threonine residues and this phosphorylation attenuates the ability of PAGE4 to potentiate the transcriptional activator activity of JUN. This chain is Dual specificity protein kinase CLK2 (Clk2), found in Mus musculus (Mouse).